The following is a 59-amino-acid chain: Chromatin protein Cren7 (59 aa).

This sequence belongs to the Cren7 family. In terms of assembly, monomer. In terms of processing, methylated at multiple sites, to varying extents.

Its subcellular location is the chromosome. The protein localises to the cytoplasm. In terms of biological role, a chromatin protein, binds double-stranded DNA without sequence specificity. Constrains negative DNA supercoils. The protein is Chromatin protein Cren7 of Pyrobaculum aerophilum (strain ATCC 51768 / DSM 7523 / JCM 9630 / CIP 104966 / NBRC 100827 / IM2).